The following is a 322-amino-acid chain: Putative ankyrin repeat protein L897 (322 aa).

ANK repeat units lie at residues 88–117 (DNEYYTYFALSIGAMDVFKWLISHGFSYDM), 181–210 (NIIDVIEYAVQINNCDIIKILVKKFIFWAN), and 248–277 (NKNEALKYAIMMKNYDMIELLINYNIQTDH).

This Acanthamoeba polyphaga (Amoeba) protein is Putative ankyrin repeat protein L897.